The following is a 250-amino-acid chain: Probable dihydroorotate dehydrogenase B (NAD(+)), electron transfer subunit (250 aa).

Residues 1–89 (MINLKIEENV…RGPYGNGFDV (89 aa)) enclose the FAD-binding FR-type domain. Positions 200, 205, 208, and 216 each coordinate [2Fe-2S] cluster.

It belongs to the PyrK family. In terms of assembly, heterotetramer of 2 PyrK and 2 PyrD type B subunits. [2Fe-2S] cluster is required as a cofactor. The cofactor is FAD.

Its pathway is pyrimidine metabolism; UMP biosynthesis via de novo pathway; orotate from (S)-dihydroorotate (NAD(+) route): step 1/1. In terms of biological role, responsible for channeling the electrons from the oxidation of dihydroorotate from the FMN redox center in the PyrD type B subunit to the ultimate electron acceptor NAD(+). In Thermoplasma volcanium (strain ATCC 51530 / DSM 4299 / JCM 9571 / NBRC 15438 / GSS1), this protein is Probable dihydroorotate dehydrogenase B (NAD(+)), electron transfer subunit.